The primary structure comprises 437 residues: MTDTIFALSSGQPPAGIGVIRISGPGAGAALSSLAGRLPSPRRATLATLADPRDGTHLDRTMVLWLPGPATATGEDCAELHLHGGRAVIAAVEAALSSLPGLRRARPGEFTRRAFANGRIDLAEAEGLADLLSAETELQRRTALAMAEGALSREVDEWRTTLLQISARLEAALDFSDEDDVGAGDGTQRASLLPPHFAADCISLACSLNTWLDRPRAEPLKEGFRVVLAGPPNAGKSTLFNALVEHEAAITAAEPGTTRDLLTHAAALDGVPFTFVDTAGLRDEGAGEIERIGIARARAAAEKADLILWLGPEGLGPAGRTLWEIAARADDPGAGRKSQCAFHLSAVTGEGMAAFRSALIAHARSALPAPGEAALNQRQHTHLSEVARALEDAAAEQDPLLAAENLRLGRRGLDALVGRTGTEDMLDTLFGRFCIGK.

Residues Arg-21, Glu-79, and Arg-119 each contribute to the (6S)-5-formyl-5,6,7,8-tetrahydrofolate site. Positions 223–364 constitute a TrmE-type G domain; sequence GFRVVLAGPP…FRSALIAHAR (142 aa). Residues 233-238, 252-258, and 277-280 each bind GTP; these read NAGKST, AAEPGTT, and DTAG. Residues Ser-237 and Thr-258 each coordinate Mg(2+). Lys-437 lines the (6S)-5-formyl-5,6,7,8-tetrahydrofolate pocket.

The protein belongs to the TRAFAC class TrmE-Era-EngA-EngB-Septin-like GTPase superfamily. TrmE GTPase family. In terms of assembly, homodimer. Heterotetramer of two MnmE and two MnmG subunits. K(+) serves as cofactor.

It is found in the cytoplasm. Its function is as follows. Exhibits a very high intrinsic GTPase hydrolysis rate. Involved in the addition of a carboxymethylaminomethyl (cmnm) group at the wobble position (U34) of certain tRNAs, forming tRNA-cmnm(5)s(2)U34. This is tRNA modification GTPase MnmE from Novosphingobium aromaticivorans (strain ATCC 700278 / DSM 12444 / CCUG 56034 / CIP 105152 / NBRC 16084 / F199).